Here is a 479-residue protein sequence, read N- to C-terminus: MSVCVRIAPSPTGNLHIGTARTAVFNWLYARRHGGRFILRIEDTDRDRSLPRYTRNILAGLAWLGLDWDEGPVYQSKRIERYQAVVQQLLDRGLAYRCYVSEAELEEMRAAQKAAGKAPRYDNRHRFLTEAQRRAYEAEGRQPVIRFKIEEPLEVSWVDLIRGPITWNTQDLGGDMVIARADGCPLYNLAVVVDDIDMGITHVIRGEDHIGNTPKQILLYRALGHEPPQFAHSPLILNPEGKKLSKRDGATSVAEFQQLGFLPEALKNYLALLSWSPPDGEELFSLEKAAALFDFDRVNRAAARFDWDKLNWINSQYIKRLSPPELVERLTPFWQAAGFDLSEVPDPTWLEDVARLIADGIDRLAEAPPLSRFLFQEPLSYTLPALEQLRLPGVAEAMAAMATTLAAAELPQVSADSLKPLVDQVAKGQNMKKGLLMKSLRAALTGDLQGPDLLESFALLQRRGWALGRLEAVQKLVPC.

Positions proline 9 to threonine 19 match the 'HIGH' region motif. Positions lysine 243–arginine 247 match the 'KMSKS' region motif. Position 246 (lysine 246) interacts with ATP.

The protein belongs to the class-I aminoacyl-tRNA synthetase family. Glutamate--tRNA ligase type 1 subfamily. Monomer.

Its subcellular location is the cytoplasm. It carries out the reaction tRNA(Glu) + L-glutamate + ATP = L-glutamyl-tRNA(Glu) + AMP + diphosphate. Functionally, catalyzes the attachment of glutamate to tRNA(Glu) in a two-step reaction: glutamate is first activated by ATP to form Glu-AMP and then transferred to the acceptor end of tRNA(Glu). This Synechococcus sp. (strain JA-2-3B'a(2-13)) (Cyanobacteria bacterium Yellowstone B-Prime) protein is Glutamate--tRNA ligase.